We begin with the raw amino-acid sequence, 1214 residues long: BOS complex subunit NOMO1 (1214 aa).

An N-terminal signal peptide occupies residues methionine 1–glycine 23. At serine 24–glutamine 1150 the chain is on the extracellular side. N-linked (GlcNAc...) asparagine glycosylation is found at asparagine 42, asparagine 210, and asparagine 610. The stretch at lysine 692–glutamate 720 forms a coiled coil. Positions threonine 708 to alanine 726 are enriched in basic and acidic residues. The interval threonine 708–methionine 733 is disordered. Residues glycine 1151–tyrosine 1167 form a helical membrane-spanning segment. Residues asparagine 1168–threonine 1214 are Cytoplasmic-facing. A disordered region spans residues glycine 1190–threonine 1214. 2 positions are modified to phosphoserine: serine 1196 and serine 1197. The segment covering glutamine 1205–threonine 1214 has biased composition (basic residues).

In terms of assembly, component of the back of Sec61 (BOS) complex, composed of NCLN/Nicalin, NOMO (NOMO1, NOMO2 or NOMO3) and TMEM147. The BOS complex is part of the multi-pass translocon (MPT) complex, composed of three subcomplexes, the GEL complex (composed of RAB5IF/OPTI and TMCO1), the BOS complex (composed of NCLN/Nicalin, NOMO and TMEM147) and the PAT complex (composed of WDR83OS/Asterix and CCDC47). The MPT complex associates with the SEC61 complex.

It localises to the endoplasmic reticulum membrane. Functionally, component of the multi-pass translocon (MPT) complex that mediates insertion of multi-pass membrane proteins into the lipid bilayer of membranes. The MPT complex takes over after the SEC61 complex: following membrane insertion of the first few transmembrane segments of proteins by the SEC61 complex, the MPT complex occludes the lateral gate of the SEC61 complex to promote insertion of subsequent transmembrane regions. In Mus musculus (Mouse), this protein is BOS complex subunit NOMO1.